The following is a 224-amino-acid chain: Phosphoribosylformylglycinamidine synthase subunit PurQ (224 aa).

Residues 2 to 224 (TVAVVRFGGS…DGQGILGAFA (223 aa)) form the Glutamine amidotransferase type-1 domain. Cys85 functions as the Nucleophile in the catalytic mechanism. Residues His202 and Glu204 contribute to the active site.

As to quaternary structure, part of the FGAM synthase complex composed of 1 PurL, 1 PurQ and 2 PurS subunits.

It localises to the cytoplasm. It catalyses the reaction N(2)-formyl-N(1)-(5-phospho-beta-D-ribosyl)glycinamide + L-glutamine + ATP + H2O = 2-formamido-N(1)-(5-O-phospho-beta-D-ribosyl)acetamidine + L-glutamate + ADP + phosphate + H(+). The catalysed reaction is L-glutamine + H2O = L-glutamate + NH4(+). The protein operates within purine metabolism; IMP biosynthesis via de novo pathway; 5-amino-1-(5-phospho-D-ribosyl)imidazole from N(2)-formyl-N(1)-(5-phospho-D-ribosyl)glycinamide: step 1/2. Its function is as follows. Part of the phosphoribosylformylglycinamidine synthase complex involved in the purines biosynthetic pathway. Catalyzes the ATP-dependent conversion of formylglycinamide ribonucleotide (FGAR) and glutamine to yield formylglycinamidine ribonucleotide (FGAM) and glutamate. The FGAM synthase complex is composed of three subunits. PurQ produces an ammonia molecule by converting glutamine to glutamate. PurL transfers the ammonia molecule to FGAR to form FGAM in an ATP-dependent manner. PurS interacts with PurQ and PurL and is thought to assist in the transfer of the ammonia molecule from PurQ to PurL. This chain is Phosphoribosylformylglycinamidine synthase subunit PurQ, found in Halobacterium salinarum (strain ATCC 700922 / JCM 11081 / NRC-1) (Halobacterium halobium).